The primary structure comprises 204 residues: LexA repressor (204 aa).

A DNA-binding region (H-T-H motif) is located at residues 28-48 (VREIGQAVGLASSSTVHGHLS). Active-site for autocatalytic cleavage activity residues include Ser126 and Lys164.

This sequence belongs to the peptidase S24 family. Homodimer.

The catalysed reaction is Hydrolysis of Ala-|-Gly bond in repressor LexA.. Functionally, represses a number of genes involved in the response to DNA damage (SOS response), including recA and lexA. In the presence of single-stranded DNA, RecA interacts with LexA causing an autocatalytic cleavage which disrupts the DNA-binding part of LexA, leading to derepression of the SOS regulon and eventually DNA repair. The sequence is that of LexA repressor from Bacillus mycoides (strain KBAB4) (Bacillus weihenstephanensis).